Consider the following 880-residue polypeptide: MPRQRAPKEEEAELLTKQERSARSSEDASDTSISSISTTSLVLEHINDPAINGTSRSRRGEKYTDEDDEAQEAFDVEGGRYKSPISVDKKTRRWLWIVGIACVTGWALALVFFLMSGSYKHVSTRPHDPLASSTKGSGKKITMDDVFGGRFYAREQSLKWIAGPNGEDGLLLERDAGNAEYLVVEDIRNKGDGDSSAKKTKLMQKSGFNVNGYFVRPVEVWPSKDFKKTGEPLDPENQDGRVQLASLSPQSDAVVFTRNNNMYLRKLDSKEVIQITRDGGSELFYGIPDWVYEEEVFQTNSATWWSEDGKYIAFLRTDESTVPTYPVQYFVSRPSGDKPKAGEENYPEVRNIKYPKAGAPNPIVTLQFYDVEKAEVFSVEIEDDFRDNNRLITEIVWAGKTKQVLVRETNRESDILKVVLMDVEKRTGKTVRTENVAELDGGWFEVSQKTTFVPADPANGRKDDGYIDTIIHEGYDHIGYFTPLDNDKPIVLSQGEWEVVDAPSRVDLKNNIVYYISTAKSSMERHAYSVFLNGTGTSEVVENSGSGYYGASFSAGGSYALITYQGPGIPWQKIISTPSSKDKFEKVLEENKALDRFVREREMPILNYQTIEVDGFKLNVLERRPPHFNEKKKYPVLFYQYSGPGSQEVNKKFHVDFQAYIAANLEYIVVTVDGRGTGFLGRKLRCITRGNIGYYEAHDQIAAAKIWASKKYVDADRLAIWGWSYGGFNTLKTLEQDAGQTFKYGMAVAPVTDWRYYDSIYTERYMHTPQNNAAGYNNSTITDVASLAKNTRFLLMHGVADDNVHMQNTLTLLDRLDLAGVENYDVHVFPDSDHSIYFHNANRIVYDKLRWWLINAFNGEWAKIKTAEPKAQVDARMERR.

Residues 1 to 26 show a composition bias toward basic and acidic residues; sequence MPRQRAPKEEEAELLTKQERSARSSE. The segment at 1 to 71 is disordered; that stretch reads MPRQRAPKEE…KYTDEDDEAQ (71 aa). Over 1 to 93 the chain is Cytoplasmic; that stretch reads MPRQRAPKEE…PISVDKKTRR (93 aa). Residues 30-40 are compositionally biased toward low complexity; the sequence is DTSISSISTTS. Residues 94–114 traverse the membrane as a helical; Signal-anchor for type II membrane protein segment; the sequence is WLWIVGIACVTGWALALVFFL. The Vacuolar portion of the chain corresponds to 115–880; that stretch reads MSGSYKHVST…AQVDARMERR (766 aa). An N-linked (GlcNAc...) asparagine glycan is attached at Asn-533. Ser-724 acts as the Charge relay system in catalysis. Asn-778 carries N-linked (GlcNAc...) asparagine glycosylation. Residues Asp-801 and His-834 each act as charge relay system in the active site.

Belongs to the peptidase S9B family.

The protein localises to the vacuole membrane. The enzyme catalyses Release of an N-terminal dipeptide, Xaa-Yaa-|-Zaa-, from a polypeptide, preferentially when Yaa is Pro, provided Zaa is neither Pro nor hydroxyproline.. Type IV dipeptidyl-peptidase which removes N-terminal dipeptides sequentially from polypeptides having unsubstituted N-termini provided that the penultimate residue is proline. This Pyrenophora tritici-repentis (strain Pt-1C-BFP) (Wheat tan spot fungus) protein is Probable dipeptidyl-aminopeptidase B (dapB).